The following is a 111-amino-acid chain: uncharacterized protein (111 aa).

A helical transmembrane segment spans residues 20–39 (PVDTTGLIFFAVFASSFVLY).

The protein localises to the membrane. This is an uncharacterized protein from Saccharomyces cerevisiae (strain ATCC 204508 / S288c) (Baker's yeast).